The following is a 905-amino-acid chain: Patched domain-containing protein 3 (905 aa).

The tract at residues 1 to 67 is disordered; the sequence is MISSKVAPGE…PVGQEAPPPR (67 aa). Residues 94 to 114 form a helical membrane-spanning segment; sequence WLFLLGPVLLTASLGTGLIFL. 4 N-linked (GlcNAc...) asparagine glycosylation sites follow: asparagine 146, asparagine 199, asparagine 229, and asparagine 233. 6 consecutive transmembrane segments (helical) span residues 337-357, 369-389, 391-411, 441-461, 475-495, and 558-578; these read TVIPLFHLAYILIILFAVVSC, VAVFGVFSVAMSVVSGFGLML, IGVPFVIIVANSPFLILGVGV, VAVSITITTITNVLAFYTGIT, GTTLLFCYFYSITCFGAIMAL, and FIVVLIYIFYIISSIYGCFQV. An SSD domain is found at 338–495; that stretch reads VIPLFHLAYI…ITCFGAIMAL (158 aa). Asparagine 647, asparagine 661, and asparagine 692 each carry an N-linked (GlcNAc...) asparagine glycan. 5 helical membrane-spanning segments follow: residues 759–779, 781–801, 813–833, 849–869, and 882–902; these read VMIASTAMFIVSLLLIPHPVC, LWVTFAIASVIVGVTGFMAFW, LVICIGFSFDFSAHISYAFVS, LLGYPVLQSAISTIIGVCVLA, and IMFLVMFFGAAHGLIFIPVFL.

It belongs to the patched family. Expressed in germ cells of the testis (at protein level).

It is found in the cell projection. The protein localises to the cilium. It localises to the flagellum membrane. The protein resides in the endoplasmic reticulum membrane. Its function is as follows. May play a role in sperm development or sperm function. However, does not appear to have an essential role in spermatogenesis or male fertility. In Rattus norvegicus (Rat), this protein is Patched domain-containing protein 3.